The sequence spans 264 residues: Caffeoyl-CoA O-methyltransferase 2 (264 aa).

Over residues Met-1–Ala-20 the composition is skewed to low complexity. The disordered stretch occupies residues Met-1–His-37. Basic and acidic residues predominate over residues Gln-28–His-37. Lys-38 contributes to the substrate binding site. S-adenosyl-L-methionine contacts are provided by residues Thr-80, Glu-102, Gly-104–Val-105, Ser-110, Asp-128, and Ala-157. A substrate-binding site is contributed by Asp-180. Asp-180 is an a divalent metal cation binding site. Position 182 (Asp-182) interacts with S-adenosyl-L-methionine. Asp-206 and Asn-207 together coordinate a divalent metal cation. Substrate is bound at residue Asn-211.

The protein belongs to the class I-like SAM-binding methyltransferase superfamily. Cation-dependent O-methyltransferase family. CCoAMT subfamily. Requires a divalent metal cation as cofactor.

It catalyses the reaction (E)-caffeoyl-CoA + S-adenosyl-L-methionine = (E)-feruloyl-CoA + S-adenosyl-L-homocysteine + H(+). Its pathway is aromatic compound metabolism; phenylpropanoid biosynthesis. In terms of biological role, methylates caffeoyl-CoA to feruloyl-CoA and 5-hydroxyferuloyl-CoA to sinapoyl-CoA. Plays a role in the synthesis of feruloylated polysaccharides. Involved in the reinforcement of the plant cell wall. Also involved in the responding to wounding or pathogen challenge by the increased formation of cell wall-bound ferulic acid polymers. The chain is Caffeoyl-CoA O-methyltransferase 2 (CCOAOMT2) from Zea mays (Maize).